The following is a 171-amino-acid chain: Peptidyl-prolyl cis-trans isomerase (171 aa).

The region spanning 7–170 (FFDLTIGGAP…KPVVIADCGQ (164 aa)) is the PPIase cyclophilin-type domain.

It belongs to the cyclophilin-type PPIase family. In terms of tissue distribution, expressed in leaves, floral buds, growing shoots and stamens at anthesis.

The protein localises to the cytoplasm. The enzyme catalyses [protein]-peptidylproline (omega=180) = [protein]-peptidylproline (omega=0). Binds cyclosporin A (CsA). CsA mediates some of its effects via an inhibitory action on PPIase. PPIases accelerate the folding of proteins. It catalyzes the cis-trans isomerization of proline imidic peptide bonds in oligopeptides. The sequence is that of Peptidyl-prolyl cis-trans isomerase from Solanum lycopersicum (Tomato).